The chain runs to 393 residues: tRNA(Met) cytidine acetate ligase (393 aa).

ATP is bound by residues G81, N142, and R167.

Belongs to the TmcAL family.

It is found in the cytoplasm. The enzyme catalyses cytidine(34) in elongator tRNA(Met) + acetate + ATP = N(4)-acetylcytidine(34) in elongator tRNA(Met) + AMP + diphosphate. Its function is as follows. Catalyzes the formation of N(4)-acetylcytidine (ac(4)C) at the wobble position of elongator tRNA(Met), using acetate and ATP as substrates. First activates an acetate ion to form acetyladenylate (Ac-AMP) and then transfers the acetyl group to tRNA to form ac(4)C34. In Bacillus cereus (strain ZK / E33L), this protein is tRNA(Met) cytidine acetate ligase.